Reading from the N-terminus, the 112-residue chain is Cortistatin (112 aa).

The signal sequence occupies residues 1–27; sequence MGGCSTRGKRPSALSLLLLLLLSGIAA. Positions 28-81 are excised as a propeptide; the sequence is SALPLESGPTGQDSVQDATGGRRTGLLTFLAWWHEWASQDSSSTAFEGGTPELS. The tract at residues 66–101 is disordered; the sequence is QDSSSTAFEGGTPELSKRQERPPLQQPPHRDKKPCK. A disulfide bridge links cysteine 100 with cysteine 111.

It belongs to the somatostatin family. Interneurons in the cerebral cortex and hippocampus.

It localises to the secreted. Functionally, neuropeptide with neuronal depressant and sleep-modulating properties. The chain is Cortistatin (Cort) from Rattus norvegicus (Rat).